A 204-amino-acid chain; its full sequence is Cysteine-rich protein 3 (204 aa).

An LIM zinc-binding 1 domain is found at 3-64 (WTCPRCQQPV…KPCYGALFGP (62 aa)). The tract at residues 88-107 (ISLSPSNFSPPRPRTGLSRA) is disordered. Residues 122–183 (SLCPGCGDPV…IPCYGYLFGP (62 aa)) enclose the LIM zinc-binding 2 domain.

Expressed specifically by the thymus.

The protein resides in the cytoplasm. This Mus musculus (Mouse) protein is Cysteine-rich protein 3 (Crip3).